A 952-amino-acid polypeptide reads, in one-letter code: Probable RNA-binding protein 19 (952 aa).

One can recognise an RRM 1 domain in the interval 2–79 (SRLIVKNLPN…TRITVEFCKS (78 aa)). Disordered regions lie at residues 85 to 126 (KPRA…LEKL), 159 to 267 (KAKT…RGAV), and 367 to 395 (KQAP…EEED). The span at 95 to 109 (KSSQPKQPSQDSVPS) shows a compositional bias: low complexity. Residues 163 to 180 (KASSDYLNFDSDSNSDSG) show a composition bias toward polar residues. Ser-177, Ser-179, and Ser-183 each carry phosphoserine. Acidic residues-rich tracts occupy residues 181 to 196 (QESE…EEEQ) and 224 to 251 (SSED…EEEG). 2 RRM domains span residues 293-368 (YTVK…REKQ) and 400-478 (GRLF…PSTI). Lys-479 is covalently cross-linked (Glycyl lysine isopeptide (Lys-Gly) (interchain with G-Cter in SUMO2)). Positions 481–504 (EASQEANAPGSSYKKKKEAMDKAN) are disordered. The region spanning 584–656 (TVILAKNLPA…VPLYLEWAPI (73 aa)) is the RRM 4 domain. Residues 664–679 (QKKDSQHEQPAEKAEV) are compositionally biased toward basic and acidic residues. The disordered stretch occupies residues 664–719 (QKKDSQHEQPAEKAEVEQETVLDPEGEKASVEGAEASTGKMEEEEEEEEEEEEESI). Ser-693 bears the Phosphoserine mark. Over residues 705–718 (EEEEEEEEEEEEES) the composition is skewed to acidic residues. 2 consecutive RRM domains span residues 722-803 (CTLF…ISER) and 824-904 (SKIL…WADS). Phosphoserine occurs at positions 928 and 944.

Belongs to the RRM MRD1 family. Expressed in the crypts of Lieberkuhn of the intestine (at protein level).

The protein resides in the nucleus. It localises to the nucleolus. It is found in the nucleoplasm. Its subcellular location is the cytoplasm. The protein localises to the chromosome. Functionally, plays a role in embryo pre-implantation development. This chain is Probable RNA-binding protein 19 (Rbm19), found in Mus musculus (Mouse).